The following is a 226-amino-acid chain: Small ribosomal subunit protein uS3 (226 aa).

In terms of domain architecture, KH type-2 spans valine 39–arginine 107.

The protein belongs to the universal ribosomal protein uS3 family. As to quaternary structure, part of the 30S ribosomal subunit. Forms a tight complex with proteins S10 and S14.

Binds the lower part of the 30S subunit head. Binds mRNA in the 70S ribosome, positioning it for translation. This is Small ribosomal subunit protein uS3 from Idiomarina loihiensis (strain ATCC BAA-735 / DSM 15497 / L2-TR).